A 360-amino-acid chain; its full sequence is Peptide chain release factor 1 (360 aa).

Glutamine 235 carries the N5-methylglutamine modification.

It belongs to the prokaryotic/mitochondrial release factor family. Methylated by PrmC. Methylation increases the termination efficiency of RF1.

Its subcellular location is the cytoplasm. In terms of biological role, peptide chain release factor 1 directs the termination of translation in response to the peptide chain termination codons UAG and UAA. This Paraburkholderia phymatum (strain DSM 17167 / CIP 108236 / LMG 21445 / STM815) (Burkholderia phymatum) protein is Peptide chain release factor 1.